Reading from the N-terminus, the 435-residue chain is NADH-ubiquinone oxidoreductase chain 4 (435 aa).

The next 13 membrane-spanning stretches (helical) occupy residues 27–47 (VLTI…ELNG), 53–73 (FVMG…YLSS), 80–100 (ASFN…FSVS), 102–122 (FFLF…LIVG), 132–152 (AGGY…WGVS), 177–197 (LWWL…FHLW), 206–226 (PVAG…YGLL), 239–259 (VFFV…GLAC), 267–285 (CLVA…LGVL), 295–317 (AIII…NAIY), 324–344 (LLVM…MCFL), 372–394 (SXAF…LYLY), and 414–434 (LCDV…FMFM).

It belongs to the complex I subunit 4 family.

It localises to the mitochondrion membrane. It catalyses the reaction a ubiquinone + NADH + 5 H(+)(in) = a ubiquinol + NAD(+) + 4 H(+)(out). Its function is as follows. Core subunit of the mitochondrial membrane respiratory chain NADH dehydrogenase (Complex I) that is believed to belong to the minimal assembly required for catalysis. Complex I functions in the transfer of electrons from NADH to the respiratory chain. The immediate electron acceptor for the enzyme is believed to be ubiquinone. The polypeptide is NADH-ubiquinone oxidoreductase chain 4 (ND4) (Mytilus edulis (Blue mussel)).